An 89-amino-acid chain; its full sequence is Cell division topological specificity factor (89 aa).

This sequence belongs to the MinE family.

Its function is as follows. Prevents the cell division inhibition by proteins MinC and MinD at internal division sites while permitting inhibition at polar sites. This ensures cell division at the proper site by restricting the formation of a division septum at the midpoint of the long axis of the cell. The polypeptide is Cell division topological specificity factor (Legionella pneumophila (strain Paris)).